We begin with the raw amino-acid sequence, 265 residues long: Small ribosomal subunit protein uS2 (265 aa).

Residues 226–265 (AAAPNSASVREEEFSADAADEGKGRRAPAKKGDKKADAAE) form a disordered region. The segment covering 245-265 (DEGKGRRAPAKKGDKKADAAE) has biased composition (basic and acidic residues).

The protein belongs to the universal ribosomal protein uS2 family.

In Xanthomonas axonopodis pv. citri (strain 306), this protein is Small ribosomal subunit protein uS2.